The chain runs to 1588 residues: Pentafunctional AROM polypeptide (1588 aa).

The tract at residues Met1–Asp392 is 3-dehydroquinate synthase. Residues Asp43 to Asn45, Glu78 to Lys81, Gly109 to Val111, and Asp114 each bind NAD(+). Arg125 lines the 7-phospho-2-dehydro-3-deoxy-D-arabino-heptonate pocket. Thr134–Ser135 is a binding site for NAD(+). 7-phospho-2-dehydro-3-deoxy-D-arabino-heptonate contacts are provided by Asp141 and Lys147. Lys156 lines the NAD(+) pocket. Asn157 is a binding site for 7-phospho-2-dehydro-3-deoxy-D-arabino-heptonate. NAD(+)-binding positions include Trp174 to Thr177 and Asn185. Zn(2+) is bound at residue Glu189. 7-phospho-2-dehydro-3-deoxy-D-arabino-heptonate-binding positions include Glu189–Lys192 and Lys258. Glu268 (proton acceptor; for 3-dehydroquinate synthase activity) is an active-site residue. 7-phospho-2-dehydro-3-deoxy-D-arabino-heptonate contacts are provided by residues Arg272–Asn276 and His279. His279 lines the Zn(2+) pocket. Catalysis depends on His283, which acts as the Proton acceptor; for 3-dehydroquinate synthase activity. 2 residues coordinate 7-phospho-2-dehydro-3-deoxy-D-arabino-heptonate: His295 and Lys364. His295 contributes to the Zn(2+) binding site. Residues Val405–Ala871 are EPSP synthase. Cys853 (for EPSP synthase activity) is an active-site residue. A shikimate kinase region spans residues Ser890 to Cys1080. Gly895 to Thr902 contributes to the ATP binding site. A 3-dehydroquinase region spans residues Leu1081–Gln1293. His1198 serves as the catalytic Proton acceptor; for 3-dehydroquinate dehydratase activity. Catalysis depends on Lys1227, which acts as the Schiff-base intermediate with substrate; for 3-dehydroquinate dehydratase activity. The interval Pro1306 to Glu1588 is shikimate dehydrogenase.

The protein in the N-terminal section; belongs to the sugar phosphate cyclases superfamily. Dehydroquinate synthase family. This sequence in the 2nd section; belongs to the EPSP synthase family. In the 3rd section; belongs to the shikimate kinase family. It in the 4th section; belongs to the type-I 3-dehydroquinase family. The protein in the C-terminal section; belongs to the shikimate dehydrogenase family. In terms of assembly, homodimer. Zn(2+) serves as cofactor.

The protein resides in the cytoplasm. It carries out the reaction 7-phospho-2-dehydro-3-deoxy-D-arabino-heptonate = 3-dehydroquinate + phosphate. The catalysed reaction is 3-dehydroquinate = 3-dehydroshikimate + H2O. The enzyme catalyses shikimate + NADP(+) = 3-dehydroshikimate + NADPH + H(+). It catalyses the reaction shikimate + ATP = 3-phosphoshikimate + ADP + H(+). It carries out the reaction 3-phosphoshikimate + phosphoenolpyruvate = 5-O-(1-carboxyvinyl)-3-phosphoshikimate + phosphate. It participates in metabolic intermediate biosynthesis; chorismate biosynthesis; chorismate from D-erythrose 4-phosphate and phosphoenolpyruvate: step 2/7. It functions in the pathway metabolic intermediate biosynthesis; chorismate biosynthesis; chorismate from D-erythrose 4-phosphate and phosphoenolpyruvate: step 3/7. The protein operates within metabolic intermediate biosynthesis; chorismate biosynthesis; chorismate from D-erythrose 4-phosphate and phosphoenolpyruvate: step 4/7. Its pathway is metabolic intermediate biosynthesis; chorismate biosynthesis; chorismate from D-erythrose 4-phosphate and phosphoenolpyruvate: step 5/7. It participates in metabolic intermediate biosynthesis; chorismate biosynthesis; chorismate from D-erythrose 4-phosphate and phosphoenolpyruvate: step 6/7. In terms of biological role, the AROM polypeptide catalyzes 5 consecutive enzymatic reactions in prechorismate polyaromatic amino acid biosynthesis. The polypeptide is Pentafunctional AROM polypeptide (Saccharomyces cerevisiae (strain RM11-1a) (Baker's yeast)).